A 472-amino-acid chain; its full sequence is Ribosomal protein uS12 methylthiotransferase RimO (472 aa).

Residues 1-114 (MKFHIITLGC…IGDVVDTLQR (114 aa)) form the MTTase N-terminal domain. [4Fe-4S] cluster is bound by residues cysteine 10, cysteine 46, cysteine 78, cysteine 171, cysteine 175, and cysteine 178. One can recognise a Radical SAM core domain in the interval 157 to 388 (RITGPSAYLK…MRLQQGISRQ (232 aa)). Residues 391-460 (RRWVGRVIRV…DYDLWGEMVE (70 aa)) enclose the TRAM domain.

Belongs to the methylthiotransferase family. RimO subfamily. Requires [4Fe-4S] cluster as cofactor.

The protein resides in the cytoplasm. The enzyme catalyses L-aspartate(89)-[ribosomal protein uS12]-hydrogen + (sulfur carrier)-SH + AH2 + 2 S-adenosyl-L-methionine = 3-methylsulfanyl-L-aspartate(89)-[ribosomal protein uS12]-hydrogen + (sulfur carrier)-H + 5'-deoxyadenosine + L-methionine + A + S-adenosyl-L-homocysteine + 2 H(+). Functionally, catalyzes the methylthiolation of an aspartic acid residue of ribosomal protein uS12. In Roseiflexus sp. (strain RS-1), this protein is Ribosomal protein uS12 methylthiotransferase RimO.